The chain runs to 617 residues: Chaperone protein HscA homolog (617 aa).

The protein belongs to the heat shock protein 70 family.

In terms of biological role, chaperone involved in the maturation of iron-sulfur cluster-containing proteins. Has a low intrinsic ATPase activity which is markedly stimulated by HscB. The protein is Chaperone protein HscA homolog of Photobacterium profundum (strain SS9).